The following is a 128-amino-acid chain: Small ribosomal subunit protein uS14m (128 aa).

This sequence belongs to the universal ribosomal protein uS14 family. As to quaternary structure, component of the mitochondrial ribosome small subunit (28S) which comprises a 12S rRNA and about 30 distinct proteins. Interacts with LIAT1.

It localises to the mitochondrion. The polypeptide is Small ribosomal subunit protein uS14m (Mrps14) (Mus musculus (Mouse)).